The chain runs to 415 residues: Histidine--tRNA ligase (415 aa).

It belongs to the class-II aminoacyl-tRNA synthetase family. As to quaternary structure, homodimer.

It is found in the cytoplasm. It carries out the reaction tRNA(His) + L-histidine + ATP = L-histidyl-tRNA(His) + AMP + diphosphate + H(+). The sequence is that of Histidine--tRNA ligase from Gluconacetobacter diazotrophicus (strain ATCC 49037 / DSM 5601 / CCUG 37298 / CIP 103539 / LMG 7603 / PAl5).